The primary structure comprises 240 residues: Ribonuclease HII (240 aa).

One can recognise an RNase H type-2 domain in the interval 21 to 210; that stretch reads GLVAGVDEAG…VAAAVQRTVV (190 aa). A divalent metal cation is bound by residues aspartate 27, glutamate 28, and aspartate 119.

This sequence belongs to the RNase HII family. Mn(2+) serves as cofactor. Mg(2+) is required as a cofactor.

It is found in the cytoplasm. The enzyme catalyses Endonucleolytic cleavage to 5'-phosphomonoester.. Its function is as follows. Endonuclease that specifically degrades the RNA of RNA-DNA hybrids. The sequence is that of Ribonuclease HII from Paracidovorax citrulli (strain AAC00-1) (Acidovorax citrulli).